The primary structure comprises 304 residues: Non-specific ribonucleoside hydrolase RihC (304 aa).

His-235 is an active-site residue.

Belongs to the IUNH family. RihC subfamily.

Functionally, hydrolyzes both purine and pyrimidine ribonucleosides with a broad-substrate specificity. In Salmonella paratyphi A (strain ATCC 9150 / SARB42), this protein is Non-specific ribonucleoside hydrolase RihC.